The primary structure comprises 123 residues: MARVTVEDCIEKIPNRFRLVLMAAHRARNISAGSELTIDRDNDKNPVVALREIADETLDMDSLKDSLVNGLQRVLPSEDEEDAAREERGQQMEALPAPPVELDEAEMLKALQNDRDGAPDGRL.

The disordered stretch occupies residues 72-100 (QRVLPSEDEEDAAREERGQQMEALPAPPV).

The protein belongs to the RNA polymerase subunit omega family. In terms of assembly, the RNAP catalytic core consists of 2 alpha, 1 beta, 1 beta' and 1 omega subunit. When a sigma factor is associated with the core the holoenzyme is formed, which can initiate transcription.

It catalyses the reaction RNA(n) + a ribonucleoside 5'-triphosphate = RNA(n+1) + diphosphate. Functionally, promotes RNA polymerase assembly. Latches the N- and C-terminal regions of the beta' subunit thereby facilitating its interaction with the beta and alpha subunits. The chain is DNA-directed RNA polymerase subunit omega from Maricaulis maris (strain MCS10) (Caulobacter maris).